The sequence spans 432 residues: Septin-11 (432 aa).

The residue at position 2 (A2) is an N-acetylalanine. A Phosphoserine modification is found at S9. Residues 38–304 (QGFCFNILCV…ELYRRCKLEE (267 aa)) form the Septin-type G domain. Positions 48-55 (GETGIGKS) are G1 motif. Residues 48-55 (GETGIGKS), G103, 184-192 (KADTIAKNE), G238, and R253 contribute to the GTP site. Residues 100-103 (DTVG) form a G3 motif region. The interval 183–186 (AKAD) is G4 motif. The stretch at 320-413 (QETYEAKRNE…LLQSQAQQSG (94 aa)) forms a coiled coil. A compositionally biased stretch (low complexity) spans 403-416 (QLLQSQAQQSGAQQ). Positions 403-432 (QLLQSQAQQSGAQQTKKDKDKKNSPWLCTE) are disordered.

This sequence belongs to the TRAFAC class TrmE-Era-EngA-EngB-Septin-like GTPase superfamily. Septin GTPase family. Septins polymerize into heterooligomeric protein complexes that form filaments, and can associate with cellular membranes, actin filaments and microtubules. Forms homooligomers. GTPase activity is required for filament formation. Interacts with SEPTIN7, SEPTIN9 and SEPTIN12.

The protein localises to the cytoplasm. It localises to the cytoskeleton. It is found in the synapse. Its subcellular location is the cell projection. The protein resides in the dendritic spine. The protein localises to the axon. Its function is as follows. Filament-forming cytoskeletal GTPase. May play a role in cytokinesis (Potential). May play a role in the cytoarchitecture of neurons, including dendritic arborization and dendritic spines, and in GABAergic synaptic connectivity. In Macaca fascicularis (Crab-eating macaque), this protein is Septin-11.